The chain runs to 627 residues: Polyadenylate-binding protein, cytoplasmic and nuclear (627 aa).

Positions 1 to 11 (MSAADANQVQE) are enriched in polar residues. The segment at 1 to 46 (MSAADANQVQESLEKLNLDSAPVASTEETEQTASGETEEAADSAQV) is disordered. RRM domains follow at residues 51-129 (ASLY…WSQR), 139-216 (GNIF…KHIS), 232-309 (TNVY…RAQK), and 335-412 (VNLF…LAQR). Low complexity predominate over residues 511–535 (DFNNGANGGRQQRGYYPNRNQNQKG). Residues 511–537 (DFNNGANGGRQQRGYYPNRNQNQKGRQ) form a disordered region. A PABC domain is found at 537-618 (QQKDLAAIIA…ALTAFEEYKK (82 aa)).

This sequence belongs to the polyadenylate-binding protein type-1 family.

Its subcellular location is the cytoplasm. It is found in the nucleus. In terms of biological role, binds the poly(A) tail of mRNA. Appears to be an important mediator of the multiple roles of the poly(A) tail in mRNA biogenesis, stability and translation. In the nucleus, involved in both mRNA cleavage and polyadenylation. Is also required for efficient mRNA export to the cytoplasm. Acts in concert with a poly(A)-specific nuclease (PAN) to affect poly(A) tail shortening, which may occur concomitantly with either nucleocytoplasmic mRNA transport or translational initiation. In the cytoplasm, stimulates translation initiation and regulates mRNA decay through translation termination-coupled poly(A) shortening, probably mediated by PAN. The sequence is that of Polyadenylate-binding protein, cytoplasmic and nuclear (PAB1) from Debaryomyces hansenii (strain ATCC 36239 / CBS 767 / BCRC 21394 / JCM 1990 / NBRC 0083 / IGC 2968) (Yeast).